The chain runs to 307 residues: MNKGIMRPGHVQLRVLDMSKALEHYVELLGLIEMDRDDQGRVYLKAWTEVDKFSVVLRERDEPGMDFMGFKVVDEDALRQLERDLTAYGCAVEQLPAGELNSCGRRVRFQAPSGHHFELYADKEYTGKWGVNEVNPEAWPRDLKGMAAVRFDHCLLYGDELPATYDLFTKVLGFYLAEQVLDENGTRVAQFLSLSTKAHDVAFIHHPEKGRLHHVSFHLETWEDVLRAADLISMTDTSIDIGPTRHGLTHGKTIYFFDPSGNRSEVFCGGNYSYPDHKPVTWLAKDLGKAIFYHDRVLNERFMTVLT.

2 consecutive VOC domains span residues 7-122 and 150-269; these read RPGH…LYAD and RFDH…VFCG. Residues histidine 153, histidine 214, and glutamate 265 each contribute to the Fe cation site.

Belongs to the extradiol ring-cleavage dioxygenase family. As to quaternary structure, homotetramer. The cofactor is Fe(2+).

The catalysed reaction is catechol + O2 = (2Z,4E)-2-hydroxy-6-oxohexa-2,4-dienoate + H(+). It participates in xenobiotic degradation; toluene degradation. This Pseudomonas aeruginosa protein is Metapyrocatechase (bztE).